The chain runs to 157 residues: MRIGHGYDVHRFCDGDFITLGGVRIPHKYGLLAHSDGDVLLHALSDALLGAAALGDIGKHFPDTDPQFKGADSRALLRHVVGIVKAKGWKVGNVDATIVAQAPKMAPHIETMRQLIAEDLQVELDQVNVKATTTEKLGFTGREEGIAVHSVALLLPA.

The a divalent metal cation site is built by D8 and H10. Residues 8–10 (DVH) and 34–35 (HS) each bind 4-CDP-2-C-methyl-D-erythritol 2-phosphate. A divalent metal cation is bound at residue H42. 4-CDP-2-C-methyl-D-erythritol 2-phosphate contacts are provided by residues 56 to 58 (DIG), 61 to 65 (FPDTD), 100 to 106 (AQAPKMA), 132 to 135 (TTTE), F139, and R142.

This sequence belongs to the IspF family. Homotrimer. The cofactor is a divalent metal cation.

The enzyme catalyses 4-CDP-2-C-methyl-D-erythritol 2-phosphate = 2-C-methyl-D-erythritol 2,4-cyclic diphosphate + CMP. The protein operates within isoprenoid biosynthesis; isopentenyl diphosphate biosynthesis via DXP pathway; isopentenyl diphosphate from 1-deoxy-D-xylulose 5-phosphate: step 4/6. Involved in the biosynthesis of isopentenyl diphosphate (IPP) and dimethylallyl diphosphate (DMAPP), two major building blocks of isoprenoid compounds. Catalyzes the conversion of 4-diphosphocytidyl-2-C-methyl-D-erythritol 2-phosphate (CDP-ME2P) to 2-C-methyl-D-erythritol 2,4-cyclodiphosphate (ME-CPP) with a corresponding release of cytidine 5-monophosphate (CMP). The polypeptide is 2-C-methyl-D-erythritol 2,4-cyclodiphosphate synthase (Pseudomonas putida (strain ATCC 700007 / DSM 6899 / JCM 31910 / BCRC 17059 / LMG 24140 / F1)).